A 192-amino-acid chain; its full sequence is MKLVVGLGNPGEEYARTRHNVGFVVADRLAQLAGASFSAKKFAAELAEARLGPERVWIMKPQTYMNHSGEAVGAALRFWKLGLDDLVVVHDDLELDPYRVQLKVGGGHGGHNGVKSVNAHVGSPEYARVRVGVGRPPPRMDPADYVLGKFAKGEDAELDLCVEQAVEATRLAVELGAARAMNQVNRRSRAAD.

Residue Tyr14 coordinates tRNA. Residue His19 is the Proton acceptor of the active site. TRNA is bound by residues Tyr64, Asn66, and Asn112.

The protein belongs to the PTH family. As to quaternary structure, monomer.

Its subcellular location is the cytoplasm. It carries out the reaction an N-acyl-L-alpha-aminoacyl-tRNA + H2O = an N-acyl-L-amino acid + a tRNA + H(+). Hydrolyzes ribosome-free peptidyl-tRNAs (with 1 or more amino acids incorporated), which drop off the ribosome during protein synthesis, or as a result of ribosome stalling. Its function is as follows. Catalyzes the release of premature peptidyl moieties from peptidyl-tRNA molecules trapped in stalled 50S ribosomal subunits, and thus maintains levels of free tRNAs and 50S ribosomes. This Anaeromyxobacter dehalogenans (strain 2CP-1 / ATCC BAA-258) protein is Peptidyl-tRNA hydrolase.